The following is an 81-amino-acid chain: Small ribosomal subunit protein bS16 (81 aa).

The protein belongs to the bacterial ribosomal protein bS16 family.

In Agathobacter rectalis (strain ATCC 33656 / DSM 3377 / JCM 17463 / KCTC 5835 / VPI 0990) (Eubacterium rectale), this protein is Small ribosomal subunit protein bS16.